The primary structure comprises 326 residues: Zinc-dependent endopolyphosphatase (326 aa).

Over 1–9 (MEDKRKRRA) the chain is Cytoplasmic. The chain crosses the membrane as a helical span at residues 10 to 30 (ATLSTALILFVACCVYTLYIF). The Vacuolar segment spans residues 31 to 326 (KFDNPRLSPP…DYELIQVQCS (296 aa)). 2 N-linked (GlcNAc...) asparagine glycosylation sites follow: Asn-90 and Asn-241.

Belongs to the metallophosphoesterase superfamily. As to quaternary structure, interacts with PPN1. It depends on Zn(2+) as a cofactor. Co(2+) is required as a cofactor. The cofactor is Mg(2+).

The protein localises to the vacuole membrane. It carries out the reaction [phosphate](n+1) + n H2O = (n+1) phosphate + n H(+). Its activity is regulated as follows. Not sensitive to heparin inhibition. In terms of biological role, catalyzes the hydrolysis of inorganic polyphosphate (polyP) chains of many hundreds of phosphate residues into shorter lengths. Exclusively shows endopolyphosphatase activity, cleaving inside the polyP chain. Together with PPN1, responsible for a substantial fraction of polyphosphatase activity that is necessary to mobilize polyP stores in response to phosphate scarcity. The polypeptide is Zinc-dependent endopolyphosphatase (Saccharomyces cerevisiae (strain ATCC 204508 / S288c) (Baker's yeast)).